The following is a 225-amino-acid chain: Leucyl/phenylalanyl-tRNA--protein transferase (225 aa).

Belongs to the L/F-transferase family.

Its subcellular location is the cytoplasm. The catalysed reaction is N-terminal L-lysyl-[protein] + L-leucyl-tRNA(Leu) = N-terminal L-leucyl-L-lysyl-[protein] + tRNA(Leu) + H(+). It carries out the reaction N-terminal L-arginyl-[protein] + L-leucyl-tRNA(Leu) = N-terminal L-leucyl-L-arginyl-[protein] + tRNA(Leu) + H(+). The enzyme catalyses L-phenylalanyl-tRNA(Phe) + an N-terminal L-alpha-aminoacyl-[protein] = an N-terminal L-phenylalanyl-L-alpha-aminoacyl-[protein] + tRNA(Phe). Functionally, functions in the N-end rule pathway of protein degradation where it conjugates Leu, Phe and, less efficiently, Met from aminoacyl-tRNAs to the N-termini of proteins containing an N-terminal arginine or lysine. The chain is Leucyl/phenylalanyl-tRNA--protein transferase from Nitrobacter hamburgensis (strain DSM 10229 / NCIMB 13809 / X14).